We begin with the raw amino-acid sequence, 271 residues long: Autophagy-related protein 5 (271 aa).

Residue K145 forms a Glycyl lysine isopeptide (Lys-Gly) (interchain with G-Cter in ATG12) linkage.

It belongs to the ATG5 family. Conjugated with ATG12. Interacts with ATG10. The ATG5-ATG12 conjugate forms a complex with several units of ATG16. The ATG12-ATG5 conjugate also associates with ATG3. Conjugated to ATG12; which is essential for autophagy. Conjugation with ATG12 involves ATG7 as an E1-like activating enzyme and ATG10 as an E2-like conjugating enzyme.

It is found in the preautophagosomal structure membrane. Functionally, involved in cytoplasm to vacuole transport (Cvt) and autophagic vesicle formation. Autophagy is essential for maintenance of amino acid levels and protein synthesis under nitrogen starvation. Required for selective autophagic degradation of the nucleus (nucleophagy). Also required for mitophagy, which eliminates defective or superfluous mitochondria in order to fulfill cellular energy requirements and prevent excess ROS production. Conjugation with ATG12, through a ubiquitin-like conjugating system involving ATG7 as an E1-like activating enzyme and ATG10 as an E2-like conjugating enzyme, is essential for its function. The ATG12-ATG5 conjugate acts as an E3-like enzyme which is required for lipidation of ATG8 and ATG8 association to the vesicle membranes. ATG12-ATG5 rearranges the ATG3 catalytic center and enhances its E2 activity. This Kluyveromyces marxianus (strain DMKU3-1042 / BCC 29191 / NBRC 104275) (Yeast) protein is Autophagy-related protein 5.